The following is a 624-amino-acid chain: Dihydroxy-acid dehydratase (624 aa).

D81 provides a ligand contact to Mg(2+). A [2Fe-2S] cluster-binding site is contributed by C122. Mg(2+) is bound by residues D123 and K124. The residue at position 124 (K124) is an N6-carboxylysine. C195 is a [2Fe-2S] cluster binding site. Mg(2+) is bound at residue E499. Catalysis depends on S525, which acts as the Proton acceptor.

It belongs to the IlvD/Edd family. As to quaternary structure, homodimer. [2Fe-2S] cluster is required as a cofactor. Requires Mg(2+) as cofactor.

It catalyses the reaction (2R)-2,3-dihydroxy-3-methylbutanoate = 3-methyl-2-oxobutanoate + H2O. The enzyme catalyses (2R,3R)-2,3-dihydroxy-3-methylpentanoate = (S)-3-methyl-2-oxopentanoate + H2O. The protein operates within amino-acid biosynthesis; L-isoleucine biosynthesis; L-isoleucine from 2-oxobutanoate: step 3/4. Its pathway is amino-acid biosynthesis; L-valine biosynthesis; L-valine from pyruvate: step 3/4. Functions in the biosynthesis of branched-chain amino acids. Catalyzes the dehydration of (2R,3R)-2,3-dihydroxy-3-methylpentanoate (2,3-dihydroxy-3-methylvalerate) into 2-oxo-3-methylpentanoate (2-oxo-3-methylvalerate) and of (2R)-2,3-dihydroxy-3-methylbutanoate (2,3-dihydroxyisovalerate) into 2-oxo-3-methylbutanoate (2-oxoisovalerate), the penultimate precursor to L-isoleucine and L-valine, respectively. The polypeptide is Dihydroxy-acid dehydratase (Shewanella baltica (strain OS185)).